The primary structure comprises 54 residues: Protein GndA (54 aa).

The helical transmembrane segment at 28–50 threads the bilayer; it reads LFVVIVSFQQRALTSSVPVFLAV.

Its subcellular location is the cell inner membrane. The polypeptide is Protein GndA (Escherichia coli (strain K12)).